Here is a 171-residue protein sequence, read N- to C-terminus: Macro domain-containing protein RSc0334 (171 aa).

Residues 1 to 171 (MPIPTVTLRA…LYETALNEAR (171 aa)) form the Macro domain.

Belongs to the MacroD-type family.

The chain is Macro domain-containing protein RSc0334 from Ralstonia nicotianae (strain ATCC BAA-1114 / GMI1000) (Ralstonia solanacearum).